The following is a 115-amino-acid chain: MARALMLRKLDLAGATKAQCFTKLPWAYSTRWFSSRMGLGIRHSHTAVVLVIYVSTIIKPIHVYCTLYYAILRCCIQIYIFFFSFHVVFKRALLLRLRYAFSCTAREKKNEMFSF.

This is an uncharacterized protein from Saccharomyces cerevisiae (strain ATCC 204508 / S288c) (Baker's yeast).